Reading from the N-terminus, the 182-residue chain is Oligoribonuclease (182 aa).

Residues 8–171 (LLWLDMEMTG…ADIYESIDEL (164 aa)) enclose the Exonuclease domain. Residue tyrosine 129 is part of the active site.

It belongs to the oligoribonuclease family.

The protein localises to the cytoplasm. Functionally, 3'-to-5' exoribonuclease specific for small oligoribonucleotides. The chain is Oligoribonuclease from Thiobacillus denitrificans (strain ATCC 25259 / T1).